The sequence spans 203 residues: NADH dehydrogenase [ubiquinone] 1 alpha subcomplex assembly factor 4 (203 aa).

This sequence belongs to the NDUFAF4 family. In terms of assembly, together with NdufAF3 associates with mitochondrial complex I assembly intermediates during its biogenesis.

Functionally, involved in the assembly of mitochondrial NADH:ubiquinone oxidoreductase complex (complex I). Together with NdufAF3, involved in biogenesis of complex 1 modules N, Q and P-peripheral, but not the P-distal module. Required for recruitment of the complex I assembly factor Timmdc1 to complex 1 assembly intermediates. In Drosophila melanogaster (Fruit fly), this protein is NADH dehydrogenase [ubiquinone] 1 alpha subcomplex assembly factor 4.